The chain runs to 275 residues: Exosome complex component Rrp42 (275 aa).

The protein belongs to the RNase PH family. Rrp42 subfamily. As to quaternary structure, component of the archaeal exosome complex. Forms a hexameric ring-like arrangement composed of 3 Rrp41-Rrp42 heterodimers. The hexameric ring associates with a trimer of Rrp4 and/or Csl4 subunits.

The protein resides in the cytoplasm. Non-catalytic component of the exosome, which is a complex involved in RNA degradation. Contributes to the structuring of the Rrp41 active site. In Saccharolobus solfataricus (strain ATCC 35092 / DSM 1617 / JCM 11322 / P2) (Sulfolobus solfataricus), this protein is Exosome complex component Rrp42.